We begin with the raw amino-acid sequence, 490 residues long: Tryptophan 5-hydroxylase 2 (490 aa).

Residue Ser19 is modified to Phosphoserine. The disordered stretch occupies residues 34 to 62; that stretch reads LTLNKANSGKNDDKGNKGSSKNETATESG. Residues 50 to 62 show a composition bias toward polar residues; the sequence is KGSSKNETATESG. An ACT domain is found at 65 to 140; that stretch reads AVVFSLKNEV…TIVTLNPPEN (76 aa). 3 residues coordinate Fe cation: His318, His323, and Glu363.

It belongs to the biopterin-dependent aromatic amino acid hydroxylase family. In terms of assembly, interacts with DNAJC12. It depends on Fe(2+) as a cofactor.

It carries out the reaction (6R)-L-erythro-5,6,7,8-tetrahydrobiopterin + L-tryptophan + O2 = 5-hydroxy-L-tryptophan + (4aS,6R)-4a-hydroxy-L-erythro-5,6,7,8-tetrahydrobiopterin. It functions in the pathway aromatic compound metabolism; serotonin biosynthesis; serotonin from L-tryptophan: step 1/2. The polypeptide is Tryptophan 5-hydroxylase 2 (TPH2) (Macaca mulatta (Rhesus macaque)).